A 162-amino-acid chain; its full sequence is Probable chemoreceptor glutamine deamidase CheD (162 aa).

The protein belongs to the CheD family.

The catalysed reaction is L-glutaminyl-[protein] + H2O = L-glutamyl-[protein] + NH4(+). Probably deamidates glutamine residues to glutamate on methyl-accepting chemotaxis receptors (MCPs), playing an important role in chemotaxis. The sequence is that of Probable chemoreceptor glutamine deamidase CheD from Syntrophotalea carbinolica (strain DSM 2380 / NBRC 103641 / GraBd1) (Pelobacter carbinolicus).